The primary structure comprises 193 residues: Ion-translocating oxidoreductase complex subunit A (193 aa).

The next 6 helical transmembrane spans lie at 5-25 (ILLIISTALINNFVLVKFLGL), 39-59 (IGMGLATMFVLTVASLCAYLV), 72-92 (LRTLIFILVIAVVVQFTEMVI), 102-122 (LLGIFLPLITTNCAVLGVALL), 134-154 (VIYGFSASLGFSLVLVLFAAL), and 171-191 (SIALITAGLMSLAFMGFSGLV).

It belongs to the NqrDE/RnfAE family. The complex is composed of six subunits: RnfA, RnfB, RnfC, RnfD, RnfE and RnfG.

Its subcellular location is the cell inner membrane. Part of a membrane-bound complex that couples electron transfer with translocation of ions across the membrane. This is Ion-translocating oxidoreductase complex subunit A from Histophilus somni (strain 129Pt) (Haemophilus somnus).